The primary structure comprises 501 residues: MDLTSVLSLETWVLLAISLVLLYRLGTHKYDIFKKQGIPGPKPLPFLGNVLNYYKGIWTFDIECHKKYGKIWGLFEGQRPLFTVTDTEMIKNVLVKECYSIFTNRRDFGPVGIMSKAVSISKDEEWKRIRALLSPTFTSGKLKEMFPIIEQYGDILVKFLRREAEKGNPVTTKEVFGAYSMDVITSTAFGVSVDSLNNPKDLLWKGRKLLRFDFFDPLFLSVVLFPFLIPIYEKLNVSMFPKDSISFFRKFVDKTKENRLDYNQKHRVDFLQLMMNSHDNSKDSHKALSDMEIIAQSIIFIFAGYDTTSSTLSFALYLLATHPDVQKKLQEEIDIALPNKARPSYDKVMEMEYLDMVLNETLRLYPIGSRLERVCKQDVEMDGVFVPKGSIVMVPVFALHYDPQYWPEPEKFRPERFSKENKGSIDPYIFLPFGNGPRNCIGMRFALMNMKLALTKVLQNFSLQPCKETQIPMKLSRKAMLQPEKPIILKVVPRDAIITGA.

Cysteine 440 is a heme binding site.

This sequence belongs to the cytochrome P450 family. It depends on heme as a cofactor. In terms of tissue distribution, expressed constitutively in liver.

The protein resides in the endoplasmic reticulum membrane. The protein localises to the microsome membrane. It carries out the reaction an organic molecule + reduced [NADPH--hemoprotein reductase] + O2 = an alcohol + oxidized [NADPH--hemoprotein reductase] + H2O + H(+). Functionally, cytochromes P450 are a group of heme-thiolate monooxygenases. In liver microsomes, this enzyme is involved in an NADPH-dependent electron transport pathway. It oxidizes a variety of structurally unrelated compounds, including steroids, fatty acids, and xenobiotics. The protein is Cytochrome P450 3A31 (CYP3A31) of Mesocricetus auratus (Golden hamster).